The following is a 362-amino-acid chain: MANPVGFRFRPTDGEIVDIYLRPKNLESNTSHVDEVISTVDICSFDPWDLPSHSRMKTRDQVWYFFGRKENKYGKGDRQIRKTKSGFWKKTGVTMDIMRKTGDREKIGEKRVLVFKNHGGSKSDWAMHEYHATFSSPNQIMTYTLCKVKFKGERREFSVATGSGIKHTHSLIPPTNNSGVLSVETEGSLFHSQESQNPSQFSGFLDVDALDRDFCNILSDDFKGFFNDDDEQSKIVSMQDDRNNHTPQKPLTGVFSDHSTDGSDSDPISATTISIQTLSTCPSFGSSNPLYQITDLQESPNSIKLVSLAQEVSKTPGTGIDNDAQGTEIGEHKLGQETIKNKRAGFFHRMIQKFVKKIHLRT.

An NAC domain is found at 3–151 (NPVGFRFRPT…TYTLCKVKFK (149 aa)). A DNA-binding region spans residues 107–157 (IGEKRVLVFKNHGGSKSDWAMHEYHATFSSPNQIMTYTLCKVKFKGERREF). A disordered region spans residues 240-266 (DDRNNHTPQKPLTGVFSDHSTDGSDSD).

It localises to the nucleus. This is NAC domain-containing protein 5 (NAC005) from Arabidopsis thaliana (Mouse-ear cress).